The following is a 569-amino-acid chain: MKKISRKEYVSMYGPTTGDRVRLGDTDLILEVEHDCTTYGEEIKFGGGKTIRDGMSQTNSPSSYELDLVLTNALIVDYTGIYKADIGIKDGKIAGIGKAGNKDMQDGVDNNLCVGPATEALAAEGLIVTAGGIDTHIHFISPQQIPTAFASGVTTMIGGGTGPADGTNATTITPGRANLKSMLRAAEEYAMNLGFLAKGNVSYEPSLRDQIEAGAIGFKIHEDWGSTPAAIHHCLNVADEYDVQVAIHTDTLNEAGCVEDTLEAIAGRTIHTFHTEGAGGGHAPDVIKMAGEFNILPASTNPTIPFTKNTEAEHMDMLMVCHHLDKSIKEDVQFADSRIRPQTIAAEDQLHDMGIFSITSSDSQAMGRVGEVITRTWQTADKNKKEFGRLKEEKGDNDNFRIKRYISKYTINPAIAHGISDYVGSVEVGKYADLVLWSPAFFGIKPNMIIKGGFIALSQMGDANASIPTPQPVYYREMFGHHGKNKFDTNITFVSQAAYKAGIKEELGLDRVVLPVKNCRNITKKDLKFNDVTAHIDVNPETYKVKVDGKEVTSKAADELSLAQLYNLF.

The Urease domain occupies 131 to 569 (GGIDTHIHFI…LSLAQLYNLF (439 aa)). Residues His-136, His-138, and Lys-219 each coordinate Ni(2+). Lys-219 carries the post-translational modification N6-carboxylysine. His-221 lines the substrate pocket. Positions 248 and 274 each coordinate Ni(2+). His-322 acts as the Proton donor in catalysis. A Ni(2+)-binding site is contributed by Asp-362.

This sequence belongs to the metallo-dependent hydrolases superfamily. Urease alpha subunit family. Heterohexamer of 3 UreA (alpha) and 3 UreB (beta) subunits. Requires Ni cation as cofactor. Post-translationally, carboxylation allows a single lysine to coordinate two nickel ions.

The protein resides in the cytoplasm. The enzyme catalyses urea + 2 H2O + H(+) = hydrogencarbonate + 2 NH4(+). The protein operates within nitrogen metabolism; urea degradation; CO(2) and NH(3) from urea (urease route): step 1/1. The chain is Urease subunit beta from Helicobacter felis (strain ATCC 49179 / CCUG 28539 / NCTC 12436 / CS1).